We begin with the raw amino-acid sequence, 496 residues long: Probable cytosol aminopeptidase (496 aa).

Residues Lys-257 and Asp-262 each contribute to the Mn(2+) site. Lys-269 is an active-site residue. Residues Asp-281, Asp-341, and Glu-343 each contribute to the Mn(2+) site. Residue Arg-345 is part of the active site.

It belongs to the peptidase M17 family. Requires Mn(2+) as cofactor.

Its subcellular location is the cytoplasm. It catalyses the reaction Release of an N-terminal amino acid, Xaa-|-Yaa-, in which Xaa is preferably Leu, but may be other amino acids including Pro although not Arg or Lys, and Yaa may be Pro. Amino acid amides and methyl esters are also readily hydrolyzed, but rates on arylamides are exceedingly low.. It carries out the reaction Release of an N-terminal amino acid, preferentially leucine, but not glutamic or aspartic acids.. Its function is as follows. Presumably involved in the processing and regular turnover of intracellular proteins. Catalyzes the removal of unsubstituted N-terminal amino acids from various peptides. The sequence is that of Probable cytosol aminopeptidase from Prochlorococcus marinus (strain SARG / CCMP1375 / SS120).